A 104-amino-acid chain; its full sequence is MATKQKIRIRLKAFDYKLIDQSAAEIVDTAKRTGAIVKGPVPLPTRFKRFDILRSPHVNKTSRDQFEIRTHQRLMDIVDPTDKTVDALMKLDLPAGVDVEIKLQ.

It belongs to the universal ribosomal protein uS10 family. In terms of assembly, part of the 30S ribosomal subunit.

In terms of biological role, involved in the binding of tRNA to the ribosomes. In Albidiferax ferrireducens (strain ATCC BAA-621 / DSM 15236 / T118) (Rhodoferax ferrireducens), this protein is Small ribosomal subunit protein uS10.